Reading from the N-terminus, the 528-residue chain is Tyrosine--tRNA ligase, cytoplasmic (528 aa).

The residue at position 1 (Met1) is an N-acetylmethionine. An N-acetylglycine; in Tyrosine--tRNA ligase, cytoplasmic, N-terminally processed modification is found at Gly2. Tyr39 is an L-tyrosine binding site. A trans-resveratrol-binding site is contributed by Tyr39. Positions 44–52 match the 'HIGH' region motif; the sequence is TTGKPHVAY. L-tyrosine contacts are provided by Tyr166, Gln170, Asp173, and Gln188. Residues Gln170 and Asp173 each coordinate trans-resveratrol. Position 197 is an N6-acetyllysine (Lys197). A Phosphoserine modification is found at Ser205. An N6-acetyllysine modification is found at Lys206. The 'KMSKS' region signature appears at 222-226; the sequence is KMSSS. The Nuclear localization signal motif lies at 242-247; that stretch reads KKKLKK. Residues 339 to 363 form a disordered region; it reads AAYPDPSKQKPTAKGPAKSSEPEEI. In terms of domain architecture, tRNA-binding spans 364–468; that stretch reads IPSRLDIRVG…AGSAPGERVF (105 aa). At Ser386 the chain carries Phosphoserine. N6-acetyllysine is present on residues Lys474, Lys482, and Lys490.

It belongs to the class-I aminoacyl-tRNA synthetase family. Homodimer. Interacts (when binding to resveratrol) with PARP1; interaction stimulates the poly-ADP-ribosyltransferase activity of PARP1.

It is found in the cytoplasm. The protein localises to the nucleus. The enzyme catalyses tRNA(Tyr) + L-tyrosine + ATP = L-tyrosyl-tRNA(Tyr) + AMP + diphosphate + H(+). Resveratrol strongly inhibits the tyrosine--tRNA ligase activity. In terms of biological role, tyrosine--tRNA ligase that catalyzes the attachment of tyrosine to tRNA(Tyr) in a two-step reaction: tyrosine is first activated by ATP to form Tyr-AMP and then transferred to the acceptor end of tRNA(Tyr). Also acts as a positive regulator of poly-ADP-ribosylation in the nucleus, independently of its tyrosine--tRNA ligase activity. Activity is switched upon resveratrol-binding: resveratrol strongly inhibits the tyrosine--tRNA ligase activity and promotes relocalization to the nucleus, where YARS1 specifically stimulates the poly-ADP-ribosyltransferase activity of PARP1. The polypeptide is Tyrosine--tRNA ligase, cytoplasmic (Yars1) (Rattus norvegicus (Rat)).